The following is a 364-amino-acid chain: D-alanine--D-alanine ligase (364 aa).

The ATP-grasp domain occupies 134–347; that stretch reads RRLACINGLK…YPDLLDELIN (214 aa). ATP is bound at residue 167 to 222; that stretch reads ASEFGWPLFVKPCSLGSSVGIHKANNMDELNAAVADALRYDEEILVEEFIVGREIE. The Mg(2+) site is built by D300, E314, and N316.

The protein belongs to the D-alanine--D-alanine ligase family. Mg(2+) serves as cofactor. Requires Mn(2+) as cofactor.

Its subcellular location is the cytoplasm. The catalysed reaction is 2 D-alanine + ATP = D-alanyl-D-alanine + ADP + phosphate + H(+). The protein operates within cell wall biogenesis; peptidoglycan biosynthesis. Its function is as follows. Cell wall formation. The protein is D-alanine--D-alanine ligase of Legionella pneumophila (strain Lens).